Here is a 311-residue protein sequence, read N- to C-terminus: Biotin synthase (311 aa).

Positions 32–258 constitute a Radical SAM core domain; sequence NGVQFCQLLN…LFPLSRIRLA (227 aa). [4Fe-4S] cluster contacts are provided by C47, C51, and C54. [2Fe-2S] cluster is bound by residues C91, C124, C184, and R256.

It belongs to the radical SAM superfamily. Biotin synthase family. In terms of assembly, homodimer. [4Fe-4S] cluster is required as a cofactor. [2Fe-2S] cluster serves as cofactor.

It carries out the reaction (4R,5S)-dethiobiotin + (sulfur carrier)-SH + 2 reduced [2Fe-2S]-[ferredoxin] + 2 S-adenosyl-L-methionine = (sulfur carrier)-H + biotin + 2 5'-deoxyadenosine + 2 L-methionine + 2 oxidized [2Fe-2S]-[ferredoxin]. It functions in the pathway cofactor biosynthesis; biotin biosynthesis; biotin from 7,8-diaminononanoate: step 2/2. In terms of biological role, catalyzes the conversion of dethiobiotin (DTB) to biotin by the insertion of a sulfur atom into dethiobiotin via a radical-based mechanism. This is Biotin synthase from Methylacidiphilum infernorum (isolate V4) (Methylokorus infernorum (strain V4)).